The primary structure comprises 148 residues: Hemoglobin subunit alpha (148 aa).

The residue at position 1 (S1) is an N-acetylserine. Residues 8–148 form the Globin domain; sequence DYSAADRAEL…VCHELSSRYR (141 aa). H66 is a binding site for O2. Position 95 (H95) interacts with heme b.

It belongs to the globin family. Heterotetramer of two alpha chains and two beta chains. In terms of tissue distribution, red blood cells.

Functionally, involved in oxygen transport from the lung to the various peripheral tissues. The chain is Hemoglobin subunit alpha (HBA) from Heterodontus portusjacksoni (Port Jackson shark).